The chain runs to 368 residues: Glutamate 5-kinase (368 aa).

K9 lines the ATP pocket. The substrate site is built by S49, D136, and N148. Residues 168 to 169 (TD) and 210 to 216 (TGGMMTK) each bind ATP. In terms of domain architecture, PUA spans 275 to 353 (AGIITIDNGA…ADIENVLGYE (79 aa)).

This sequence belongs to the glutamate 5-kinase family.

The protein resides in the cytoplasm. The catalysed reaction is L-glutamate + ATP = L-glutamyl 5-phosphate + ADP. It participates in amino-acid biosynthesis; L-proline biosynthesis; L-glutamate 5-semialdehyde from L-glutamate: step 1/2. Functionally, catalyzes the transfer of a phosphate group to glutamate to form L-glutamate 5-phosphate. The polypeptide is Glutamate 5-kinase (Haemophilus influenzae (strain PittGG)).